We begin with the raw amino-acid sequence, 206 residues long: Probable glutathione S-transferase 7 (206 aa).

The region spanning 2-79 is the GST N-terminal domain; it reads VHYKVSYFPI…YLARQFGING (78 aa). Glutathione-binding positions include Y8, W39, K43, 49–51, and 63–64; these read GQL and QS. A GST C-terminal domain is found at 81–206; sequence CAWEEAQVNS…WLETRPVTPF (126 aa).

This sequence belongs to the GST superfamily. Sigma family.

The enzyme catalyses RX + glutathione = an S-substituted glutathione + a halide anion + H(+). Functionally, conjugation of reduced glutathione to a wide number of exogenous and endogenous hydrophobic electrophiles. May play a role in the detoxification of reactive oxygen species produced during pathogenic bacterial infection. This is Probable glutathione S-transferase 7 (gst-7) from Caenorhabditis elegans.